Reading from the N-terminus, the 508-residue chain is Bifunctional purine biosynthesis protein PurH (508 aa).

The 145-residue stretch at 1–145 (MAKKALISVS…KNYKYVTILV (145 aa)) folds into the MGS-like domain.

Belongs to the PurH family.

It carries out the reaction (6R)-10-formyltetrahydrofolate + 5-amino-1-(5-phospho-beta-D-ribosyl)imidazole-4-carboxamide = 5-formamido-1-(5-phospho-D-ribosyl)imidazole-4-carboxamide + (6S)-5,6,7,8-tetrahydrofolate. It catalyses the reaction IMP + H2O = 5-formamido-1-(5-phospho-D-ribosyl)imidazole-4-carboxamide. It participates in purine metabolism; IMP biosynthesis via de novo pathway; 5-formamido-1-(5-phospho-D-ribosyl)imidazole-4-carboxamide from 5-amino-1-(5-phospho-D-ribosyl)imidazole-4-carboxamide (10-formyl THF route): step 1/1. The protein operates within purine metabolism; IMP biosynthesis via de novo pathway; IMP from 5-formamido-1-(5-phospho-D-ribosyl)imidazole-4-carboxamide: step 1/1. The polypeptide is Bifunctional purine biosynthesis protein PurH (Thermoanaerobacter sp. (strain X514)).